Reading from the N-terminus, the 505-residue chain is Putative thymidine phosphorylase (505 aa).

This sequence belongs to the thymidine/pyrimidine-nucleoside phosphorylase family. Type 2 subfamily.

The enzyme catalyses thymidine + phosphate = 2-deoxy-alpha-D-ribose 1-phosphate + thymine. The chain is Putative thymidine phosphorylase from Tolumonas auensis (strain DSM 9187 / NBRC 110442 / TA 4).